The sequence spans 751 residues: MAKRSRSEDEDDDLQYADHDYEVPQQKGLKKLWNRVKWTRDEDDKLKKLVEQHGTDDWTLIASHLQNRSDFQCQHRWQKVLNPELIKGPWTKEEDQRVIELVQKYGPKRWSLIAKHLKGRIGKQCRERWHNHLNPEVKKSSWTEEEDRIIYEAHKRLGNRWAEIAKLLPGRTDNSIKNHWNSTMRRKVEQEGYLQDGIKSERSSSKLQHKPCATMDHLQTQNQFYIPVQIPGYQYVSPDGNCVEHVQTSAFIQQPFVDEDPDKEKKIKELELLLMSAENEVRRKRLPPQPGSFSSWSGSFLMDDSMSNTLNNLEEHTTEFYSMDENQTVSAQQNSPTKFLAVEANAVLSSLQTIPEFPRTLELIESDPVAWSDVTSFDLSDAAASPVKSTPVKLMRIQHNEGAMECQFNVSLVLEGKKNSRNGGDSEAIPLTSPNVVKFSTPPTISRKKKRIRVGQSAGSELGSASLSEVGNRRIKHTPVKTLPFSPSQFFNTCPGNEQLNIENPSFTSTPICGQKVLITTPLQKEATPKDQKENVGFRTPTIRRSILGTTPRTPTPFKNALAAQEKKYGPLKIVSQPLAFLEEDIREVLKEETGTDIFLKEEDEPAYKSCKQEHSASVKKVRKSLALESWDKEEPGTQLLTEDISDMQSENILTTSLLMIPLLEIHDNRCNLTPEKQDINSANKTYTLNKKRPNPNPCKAVKLEKSLQSNCEWETVVYGKTEDQLIMTEQARRYLSTYTATSSTSRALIL.

The interval 1–22 is disordered; that stretch reads MAKRSRSEDEDDDLQYADHDYE. HTH myb-type domains are found at residues 30 to 81, 82 to 137, and 138 to 188; these read KKLW…QKVL, NPEL…NPEV, and KKSS…RRKV. 3 consecutive DNA-binding regions (H-T-H motif) follow at residues 58–81, 110–133, and 161–184; these read WTLI…QKVL, WSLI…HNHL, and WAEI…NSTM. Lys199 is covalently cross-linked (Glycyl lysine isopeptide (Lys-Gly) (interchain with G-Cter in SUMO2)). The transcriptional activation domain stretch occupies residues 230 to 294; the sequence is IPGYQYVSPD…RLPPQPGSFS (65 aa). Residues 297–552 form a negative regulatory domain region; it reads SGSFLMDDSM…IRRSILGTTP (256 aa). Lys393 is modified (N6-acetyllysine). Residues Lys591 and Lys601 each participate in a glycyl lysine isopeptide (Lys-Gly) (interchain with G-Cter in SUMO2) cross-link.

As to quaternary structure, component of the DREAM complex (also named LINC complex) at least composed of E2F4, E2F5, LIN9, LIN37, LIN52, LIN54, MYBL1, MYBL2, RBL1, RBL2, RBBP4, TFDP1 and TFDP2. The complex exists in quiescent cells where it represses cell cycle-dependent genes. It dissociates in S phase when LIN9, LIN37, LIN52 and LIN54 form a subcomplex that binds to MYBL2. In terms of tissue distribution, predominantly in the testis. Very low levels in the ovaries, spleen and brain.

The protein localises to the nucleus. In terms of biological role, transcription factor that specifically recognizes the sequence 5'-YAAC[GT]G-3'. Acts as a master regulator of male meiosis by promoting expression of piRNAs: activates expression of both piRNA precursor RNAs and expression of protein-coding genes involved in piRNA metabolism, such as PIWIL1. The piRNA metabolic process mediates the repression of transposable elements during meiosis by forming complexes composed of piRNAs and Piwi proteins and governs the methylation and subsequent repression of transposons, which is essential for the germline integrity. Transcriptional activator of SOX30. This Mus musculus (Mouse) protein is Myb-related protein A (Mybl1).